Here is a 1119-residue protein sequence, read N- to C-terminus: DNA-directed RNA polymerase subunit beta (1119 aa).

This sequence belongs to the RNA polymerase beta chain family. The RNAP catalytic core consists of 2 alpha, 1 beta, 1 beta' and 1 omega subunit. When a sigma factor is associated with the core the holoenzyme is formed, which can initiate transcription.

The enzyme catalyses RNA(n) + a ribonucleoside 5'-triphosphate = RNA(n+1) + diphosphate. Functionally, DNA-dependent RNA polymerase catalyzes the transcription of DNA into RNA using the four ribonucleoside triphosphates as substrates. The polypeptide is DNA-directed RNA polymerase subunit beta (Thermus aquaticus).